The following is an 817-amino-acid chain: Anaphase-promoting complex subunit 4 (817 aa).

The residue at position 469 (Y469) is a Phosphotyrosine. Phosphoserine is present on residues S757 and S758. K772 participates in a covalent cross-link: Glycyl lysine isopeptide (Lys-Gly) (interchain with G-Cter in SUMO2). Phosphoserine is present on residues S777 and S779. K798 is covalently cross-linked (Glycyl lysine isopeptide (Lys-Gly) (interchain with G-Cter in SUMO2)).

This sequence belongs to the APC4 family. The mammalian APC/C is composed at least of 14 distinct subunits ANAPC1, ANAPC2, CDC27/APC3, ANAPC4, ANAPC5, CDC16/APC6, ANAPC7, CDC23/APC8, ANAPC10, ANAPC11, CDC26/APC12, ANAPC13, ANAPC15 and ANAPC16 that assemble into a complex of at least 19 chains with a combined molecular mass of around 1.2 MDa; APC/C interacts with FZR1 and FBXO5. In the context of the APC/C complex, directly interacts with UBE2S.

The protein resides in the nucleus. It functions in the pathway protein modification; protein ubiquitination. Its function is as follows. Component of the anaphase promoting complex/cyclosome (APC/C), a cell cycle-regulated E3 ubiquitin ligase that controls progression through mitosis and the G1 phase of the cell cycle. The APC/C complex acts by mediating ubiquitination and subsequent degradation of target proteins: it mainly mediates the formation of 'Lys-11'-linked polyubiquitin chains and, to a lower extent, the formation of 'Lys-48'- and 'Lys-63'-linked polyubiquitin chains. The APC/C complex catalyzes assembly of branched 'Lys-11'-/'Lys-48'-linked branched ubiquitin chains on target proteins. This Pongo abelii (Sumatran orangutan) protein is Anaphase-promoting complex subunit 4 (ANAPC4).